Here is a 411-residue protein sequence, read N- to C-terminus: Mitogen-activated protein kinase 8 (411 aa).

Residues 26-321 form the Protein kinase domain; sequence YQNLKPIGSG…VDEALQHPYI (296 aa). ATP is bound by residues 32–40 and Lys-55; that span reads IGSGAQGIV. An S-nitrosocysteine; in inhibited form modification is found at Cys-116. Asp-151 functions as the Proton acceptor in the catalytic mechanism. Phosphothreonine; by MAP2K7 is present on Thr-183. The TXY motif lies at 183–185; that stretch reads TPY. A Phosphotyrosine; by MAP2K4 modification is found at Tyr-185. The segment at 368 to 411 is disordered; sequence KNGVIRGQPSPLGAAVINGSQHPVSSPSVNDMSSMSTDPTLASD. Position 377 is a phosphoserine (Ser-377). The segment covering 390 to 403 has biased composition (low complexity); that stretch reads PVSSPSVNDMSSMS.

Belongs to the protein kinase superfamily. CMGC Ser/Thr protein kinase family. MAP kinase subfamily. In terms of assembly, forms a complex with MAPK8IP1 and ARHGEF28. Found in a complex with SH3RF1, RAC1, MAP3K11/MLK3, MAP2K7/MKK7 and MAPK8IP1/JIP1. Found in a complex with SH3RF1, RAC2, MAP3K7/TAK1, MAP2K7/MKK7, MAPK8IP1/JIP1 and MAPK9/JNK2. Binds to at least four scaffolding proteins, MAPK8IP1/JIP-1, MAPK8IP2/JIP-2, MAPK8IP3/JIP-3/JSAP1 and SPAG9/MAPK8IP4/JIP-4. These proteins also bind other components of the JNK signaling pathway. Interacts with TP53, WWOX. Interacts with JAMP. Interacts with NFATC4. Interacts (phosphorylated form) with NFE2; the interaction phosphorylates NFE2 in undifferentiated cells. Interacts with MECOM; regulates JNK signaling. Interacts with PIN1; this interaction mediates MAPK8 conformational changes leading to the binding of MAPK8 to its substrates. Interacts with HSF1 (via D domain and preferentially with hyperphosphorylated form); this interaction occurs under both normal growth conditions and immediately upon heat shock. Interacts with STMN2, STMN3 and STMN4. Interacts with GRIPAP1. Interacts with POU5F1; phosphorylates POU5F1 at 'Ser-347'. Interacts with HSF4. Mg(2+) is required as a cofactor. Dually phosphorylated on Thr-183 and Tyr-185 by MAP2K7 and MAP2K4, which activates the enzyme. Phosphorylated by TAOK2. Phosphorylated form is more concentrated at synapses than none-phosphorylated. Post-translationally, nitrosylated upon IFN-gamma-induced endogenous NO production, which inhibits the enzyme. May be phosphorylated at Thr-183 and Tyr-185 by MAP3K1/MEKK1.

It is found in the cytoplasm. Its subcellular location is the nucleus. The protein localises to the synapse. The enzyme catalyses L-seryl-[protein] + ATP = O-phospho-L-seryl-[protein] + ADP + H(+). It catalyses the reaction L-threonyl-[protein] + ATP = O-phospho-L-threonyl-[protein] + ADP + H(+). With respect to regulation, activated by threonine and tyrosine phosphorylation by either of two dual specificity kinases, MAP2K4 and MAP2K7. MAP2K4 shows a strong preference for Tyr-185 while MAP2K7 phosphorylates Tyr-183 preferentially. Inhibited by dual specificity phosphatases, such as DUSP1. Inhibited by SERPINB3. Inhibited by IFN-gamma-induced S-nitrosylation. Its function is as follows. Serine/threonine-protein kinase involved in various processes such as cell proliferation, differentiation, migration, transformation and programmed cell death. Extracellular stimuli such as pro-inflammatory cytokines or physical stress stimulate the stress-activated protein kinase/c-Jun N-terminal kinase (SAP/JNK) signaling pathway. In this cascade, two dual specificity kinases MAP2K4/MKK4 and MAP2K7/MKK7 phosphorylate and activate MAPK8/JNK1. In turn, MAPK8/JNK1 phosphorylates a number of transcription factors, primarily components of AP-1 such as JUN, JDP2 and ATF2 and thus regulates AP-1 transcriptional activity. Phosphorylates the replication licensing factor CDT1, inhibiting the interaction between CDT1 and the histone H4 acetylase HBO1 to replication origins. Loss of this interaction abrogates the acetylation required for replication initiation. Promotes stressed cell apoptosis by phosphorylating key regulatory factors including p53/TP53 and Yes-associates protein YAP1. In T-cells, MAPK8 and MAPK9 are required for polarized differentiation of T-helper cells into Th1 cells. Contributes to the survival of erythroid cells by phosphorylating the antagonist of cell death BAD upon EPO stimulation. Mediates starvation-induced BCL2 phosphorylation, BCL2 dissociation from BECN1, and thus activation of autophagy. Phosphorylates STMN2 and hence regulates microtubule dynamics, controlling neurite elongation in cortical neurons. In the developing brain, through its cytoplasmic activity on STMN2, negatively regulates the rate of exit from multipolar stage and of radial migration from the ventricular zone. Phosphorylates several other substrates including heat shock factor protein 4 (HSF4), the deacetylase SIRT1, ELK1, or the E3 ligase ITCH. Phosphorylates the CLOCK-BMAL1 heterodimer and plays a role in the regulation of the circadian clock. Phosphorylates the heat shock transcription factor HSF1, suppressing HSF1-induced transcriptional activity. Phosphorylates POU5F1, which results in the inhibition of POU5F1's transcriptional activity and enhances its proteasomal degradation. Phosphorylates JUND and this phosphorylation is inhibited in the presence of MEN1. In neurons, phosphorylates SYT4 which captures neuronal dense core vesicles at synapses. Phosphorylates EIF4ENIF1/4-ET in response to oxidative stress, promoting P-body assembly. Phosphorylates SIRT6 in response to oxidative stress, stimulating its mono-ADP-ribosyltransferase activity. Phosphorylates NLRP3, promoting assembly of the NLRP3 inflammasome. Phosphorylates ALKBH5 in response to reactive oxygen species (ROS), promoting ALKBH5 sumoylation and inactivation. The chain is Mitogen-activated protein kinase 8 (Mapk8) from Rattus norvegicus (Rat).